A 564-amino-acid chain; its full sequence is MVLFIILAILVVILIAIGVLFYMRSNKRNLIEKTEERKNEIEQLPLDDNLRKLTGLNLKGETKTKYDAMKKDNTETTNKYLAPVEEKIQNAEELLEKFKFTAAQTEIDDAHELMDQYEENYQHQVTQVDDIINLHKENEALYEKCKVDYREMKRDVLANRHQFGEAAEPLENEIENYEPKLNEYENLKSEGNYVQAHNHIAALEDQIKNLKSYMDEIPELIRETQKELPGQFQDLKYGCRDLKVEGYDLDHVKVDGTIQSLKTELSFVEPMISRLELDEANNKLENINDKLDEMYDLIEYEVKAKNEVEETKDIITDDLFKAKDMNYTLQTEIEYVRENYYINESDAQSVRQFENEIQSLISVYDDILKETSKSAVRYSEVQDNLQYLEDHVSVINKEQDKLQNHLIQLREDEAEAEDNLLRVQSKKEEVYRRLLASNLTSVPERFIIMKNEIDNEVREVNEQFSERPIHVKQLKDKVAKIVIQMNTFEDEANDVLVNAVYAEKLIQYGNRYRKDHHHVDKSLNEAERLFKNNRYKRAIEIAEEALESVEPGITKHIEEQVIKE.

Over 1–4 (MVLF) the chain is Extracellular. Residues 5–23 (IILAILVVILIAIGVLFYM) traverse the membrane as a helical segment. Residues 24-564 (RSNKRNLIEK…KHIEEQVIKE (541 aa)) are Cytoplasmic-facing. Coiled coils occupy residues 84 to 126 (VEEK…HQVT), 165 to 223 (EAAE…LIRE), 271 to 303 (MISR…YEVK), and 350 to 435 (VRQF…RRLL).

It belongs to the EzrA family.

The protein localises to the cell membrane. In terms of biological role, negative regulator of FtsZ ring formation; modulates the frequency and position of FtsZ ring formation. Inhibits FtsZ ring formation at polar sites. Interacts either with FtsZ or with one of its binding partners to promote depolymerization. The chain is Septation ring formation regulator EzrA from Staphylococcus epidermidis (strain ATCC 35984 / DSM 28319 / BCRC 17069 / CCUG 31568 / BM 3577 / RP62A).